Reading from the N-terminus, the 422-residue chain is Beta-1,3-galactosyltransferase 2 (422 aa).

Residues 1-20 lie on the Cytoplasmic side of the membrane; that stretch reads MLQWRRRHCCFAKMTWSPKR. Residues 21 to 43 traverse the membrane as a helical; Signal-anchor for type II membrane protein segment; the sequence is SLLRTPLTGVLSLVFLFAMFLFF. Topologically, residues 44-422 are lumenal; sequence NHHDWLPGRP…AGRYRHRKLH (379 aa). 5 N-linked (GlcNAc...) asparagine glycosylation sites follow: N75, N98, N119, N176, and N226. The tract at residues 91–110 is disordered; it reads LRPHTASNSSNTELSPQGVT. A compositionally biased stretch (polar residues) spans 95–110; that stretch reads TASNSSNTELSPQGVT.

This sequence belongs to the glycosyltransferase 31 family. Mn(2+) is required as a cofactor. Detected in brain and heart.

It localises to the golgi apparatus membrane. The enzyme catalyses an N-acetyl-beta-D-glucosaminyl derivative + UDP-alpha-D-galactose = a beta-D-galactosyl-(1-&gt;3)-N-acetyl-beta-D-glucosaminyl derivative + UDP + H(+). The catalysed reaction is a beta-D-GlcNAc-(1-&gt;3)-beta-D-Gal-(1-&gt;4)-beta-D-Glc-(1&lt;-&gt;1)-Cer(d18:1(4E)) + UDP-alpha-D-galactose = a beta-D-Gal-(1-&gt;3)-beta-D-GlcNAc-(1-&gt;3)-beta-D-Gal-(1-&gt;4)-beta-D-Glc-(1&lt;-&gt;1')-Cer(d18:1(4E)) + UDP + H(+). It carries out the reaction a neolactoside IV(3)-beta-GlcNAc-nLc4Cer(d18:1(4E)) + UDP-alpha-D-galactose = a neolactoside IV(3)-beta-[Gal-beta-(1-&gt;3)-GlcNAc]-nLc4Cer(d18:1(4E)) + UDP + H(+). The protein operates within protein modification; protein glycosylation. Its function is as follows. Beta-1,3-galactosyltransferase that transfers galactose from UDP-galactose to substrates with a terminal beta-N-acetylglucosamine (beta-GlcNAc) residue. Can also utilize substrates with a terminal galactose residue, albeit with lower efficiency. Involved in the biosynthesis of the carbohydrate moieties of glycolipids and glycoproteins. In Mus musculus (Mouse), this protein is Beta-1,3-galactosyltransferase 2.